The following is a 242-amino-acid chain: UPF0309 protein Oant_1457 (242 aa).

One can recognise an SIS domain in the interval 30–214; it reads AAELITAAAL…AKLVGKGDAP (185 aa).

The protein belongs to the UPF0309 family.

This chain is UPF0309 protein Oant_1457, found in Brucella anthropi (strain ATCC 49188 / DSM 6882 / CCUG 24695 / JCM 21032 / LMG 3331 / NBRC 15819 / NCTC 12168 / Alc 37) (Ochrobactrum anthropi).